Reading from the N-terminus, the 408-residue chain is S-adenosylmethionine synthase (408 aa).

140-145 (GQGSVD) is a binding site for ATP.

The protein belongs to the AdoMet synthase 2 family. Requires Mg(2+) as cofactor.

It catalyses the reaction L-methionine + ATP + H2O = S-adenosyl-L-methionine + phosphate + diphosphate. It participates in amino-acid biosynthesis; S-adenosyl-L-methionine biosynthesis; S-adenosyl-L-methionine from L-methionine: step 1/1. Catalyzes the formation of S-adenosylmethionine from methionine and ATP. The polypeptide is S-adenosylmethionine synthase (Caldivirga maquilingensis (strain ATCC 700844 / DSM 13496 / JCM 10307 / IC-167)).